The sequence spans 446 residues: Tol-Pal system protein TolB (446 aa).

The signal sequence occupies residues 1 to 24 (MKRAFLSALSVGLAALFLTGPAQA).

The protein belongs to the TolB family. As to quaternary structure, the Tol-Pal system is composed of five core proteins: the inner membrane proteins TolA, TolQ and TolR, the periplasmic protein TolB and the outer membrane protein Pal. They form a network linking the inner and outer membranes and the peptidoglycan layer.

It localises to the periplasm. In terms of biological role, part of the Tol-Pal system, which plays a role in outer membrane invagination during cell division and is important for maintaining outer membrane integrity. The polypeptide is Tol-Pal system protein TolB (Dinoroseobacter shibae (strain DSM 16493 / NCIMB 14021 / DFL 12)).